Here is a 1137-residue protein sequence, read N- to C-terminus: Bone sialoprotein-binding protein (1137 aa).

Positions Met-1–Ala-52 are cleaved as a signal peptide. A ligand binding A region region spans residues Ala-53–Lys-601. Disordered stretches follow at residues Glu-54–Thr-249 and Leu-675–Lys-697. A compositionally biased stretch (basic and acidic residues) spans Ala-61 to Val-75. The segment covering Glu-77 to Thr-89 has biased composition (polar residues). Positions Ile-92–Glu-106 are enriched in basic and acidic residues. Over residues Thr-109–Thr-126 the composition is skewed to low complexity. The segment covering Asn-130 to Thr-145 has biased composition (basic and acidic residues). Polar residues predominate over residues Pro-158 to Thr-207. The segment covering Ser-216–Thr-241 has biased composition (basic and acidic residues). CNA-B domains are found at residues Leu-602–Pro-714, Lys-715–Pro-824, and Lys-825–Thr-935. Residues Thr-896–Asn-1112 form a disordered region. Composition is skewed to acidic residues over residues Thr-903–Glu-913 and Tyr-930–Ser-1076. The LPXTG sorting signal signature appears at Leu-1100 to Gly-1104. Residue Thr-1103 is modified to Pentaglycyl murein peptidoglycan amidated threonine. A propeptide spans Gly-1104–Lys-1137 (removed by sortase).

The protein belongs to the serine-aspartate repeat-containing protein (SDr) family.

The protein localises to the secreted. The protein resides in the cell wall. Specifically interacts with bone sialoprotein (BSP), a glycoprotein of bone and dentin extracellular matrix. Could contribute to staphylococcal osteomyelitis and arthritis. This chain is Bone sialoprotein-binding protein (bbp), found in Staphylococcus aureus (strain MRSA252).